A 92-amino-acid chain; its full sequence is Small ribosomal subunit protein uS19c (92 aa).

Belongs to the universal ribosomal protein uS19 family.

The protein localises to the plastid. The protein resides in the chloroplast. In terms of biological role, protein S19 forms a complex with S13 that binds strongly to the 16S ribosomal RNA. In Acorus calamus (Sweet flag), this protein is Small ribosomal subunit protein uS19c.